The chain runs to 198 residues: ATP-dependent Clp protease proteolytic subunit (198 aa).

Catalysis depends on Ser-102, which acts as the Nucleophile. His-127 is a catalytic residue.

Belongs to the peptidase S14 family. As to quaternary structure, fourteen ClpP subunits assemble into 2 heptameric rings which stack back to back to give a disk-like structure with a central cavity, resembling the structure of eukaryotic proteasomes.

The protein localises to the cytoplasm. It catalyses the reaction Hydrolysis of proteins to small peptides in the presence of ATP and magnesium. alpha-casein is the usual test substrate. In the absence of ATP, only oligopeptides shorter than five residues are hydrolyzed (such as succinyl-Leu-Tyr-|-NHMec, and Leu-Tyr-Leu-|-Tyr-Trp, in which cleavage of the -Tyr-|-Leu- and -Tyr-|-Trp bonds also occurs).. In terms of biological role, cleaves peptides in various proteins in a process that requires ATP hydrolysis. Has a chymotrypsin-like activity. Plays a major role in the degradation of misfolded proteins. This Brachyspira hyodysenteriae (strain ATCC 49526 / WA1) protein is ATP-dependent Clp protease proteolytic subunit.